The chain runs to 156 residues: IEAMAHHIVPARDVLYLGRGTDYPLALEGALKLKEISYIHAEGYAAGEMKHGPIALIDELVPVICIAPSGPLFEKTVSNMQEVQARGGKVVLISAYDGVQAAGEGCLATITMPKVHPLIAPMVYAVPVQLLAYHVAVLKGTDVDQPRNLAKSVTVE.

One can recognise an SIS domain in the interval 4 to 146; it reads MAHHIVPARD…VLKGTDVDQP (143 aa). The active-site For Fru-6P isomerization activity is Lys151.

As to quaternary structure, homodimer.

It localises to the cytoplasm. The enzyme catalyses D-fructose 6-phosphate + L-glutamine = D-glucosamine 6-phosphate + L-glutamate. Catalyzes the first step in hexosamine metabolism, converting fructose-6P into glucosamine-6P using glutamine as a nitrogen source. The chain is Glutamine--fructose-6-phosphate aminotransferase [isomerizing] (glmS) from Sphingobium yanoikuyae (Sphingomonas yanoikuyae).